The primary structure comprises 293 residues: Cytidine deaminase (293 aa).

CMP/dCMP-type deaminase domains lie at 47–166 (DDRA…FGPA) and 186–293 (VSDD…YQAV). Substrate is bound at residue 88 to 90 (NME). Residue histidine 101 coordinates Zn(2+). The Proton donor role is filled by glutamate 103. The Zn(2+) site is built by cysteine 128 and cysteine 131.

Belongs to the cytidine and deoxycytidylate deaminase family. In terms of assembly, homodimer. Zn(2+) serves as cofactor.

The catalysed reaction is cytidine + H2O + H(+) = uridine + NH4(+). It catalyses the reaction 2'-deoxycytidine + H2O + H(+) = 2'-deoxyuridine + NH4(+). This enzyme scavenges exogenous and endogenous cytidine and 2'-deoxycytidine for UMP synthesis. The chain is Cytidine deaminase from Aeromonas hydrophila subsp. hydrophila (strain ATCC 7966 / DSM 30187 / BCRC 13018 / CCUG 14551 / JCM 1027 / KCTC 2358 / NCIMB 9240 / NCTC 8049).